The chain runs to 199 residues: Prolactin (199 aa).

Cys-4 and Cys-11 form a disulfide bridge. 3 positions are modified to phosphoserine: Ser-26, Ser-34, and Ser-90. 2 disulfides stabilise this stretch: Cys-58–Cys-174 and Cys-191–Cys-199.

Belongs to the somatotropin/prolactin family. Interacts with PRLR.

It is found in the secreted. Prolactin acts primarily on the mammary gland by promoting lactation. This is Prolactin (PRL) from Balaenoptera borealis (Sei whale).